The following is a 78-amino-acid chain: Conotoxin ArMKLT2-0312 (78 aa).

Positions 1–22 (MKLTCVLIIAVLFLTACQLITA) are cleaved as a signal peptide. A propeptide spanning residues 23–45 (DYSRDKQEYRAVRLRDAMRYSRV) is cleaved from the precursor. Gln-48 carries the post-translational modification Pyrrolidone carboxylic acid. 3 disulfides stabilise this stretch: Cys-49/Cys-62, Cys-56/Cys-67, and Cys-61/Cys-75.

Belongs to the conotoxin O1 superfamily. In terms of tissue distribution, expressed by the venom duct.

It is found in the secreted. In Conus arenatus (Sand-dusted cone), this protein is Conotoxin ArMKLT2-0312.